A 514-amino-acid chain; its full sequence is Sugar transport protein 4 (514 aa).

Residues 1 to 22 are Cytoplasmic-facing; sequence MAGGFVSQTPGVRNYNYKLTPK. The next 12 membrane-spanning stretches (helical) occupy residues 23 to 43, 80 to 100, 117 to 137, 140 to 160, 172 to 192, 202 to 222, 283 to 303, 321 to 341, 348 to 368, 387 to 407, 426 to 446, and 451 to 471; these read VFVT…DLGI, LLTL…LFAS, FTFF…MLLI, ILLG…LSEM, GFQV…YFTA, ISLG…LILP, LIMT…VITF, LSAM…VFTV, ILFL…GAMI, LIVA…GPLG, INVS…LTML, and FGLF…IYLM. At 472–514 the chain is on the cytoplasmic side; that stretch reads LPETKNVPIEEMNRVWKAHWFWGKFIPDEAVNMGAAEMQQKSV.

The protein belongs to the major facilitator superfamily. Sugar transporter (TC 2.A.1.1) family. As to expression, mostly in flowers and roots, especially in anthers, including pollen, and root tips. Also present in some hydathodes.

Its subcellular location is the cell membrane. Functionally, mediates an active uptake of hexoses, probably by sugar/hydrogen symport. Can transport glucose, methylglucose, galactose, xylose and mannose, but not fructose. The sequence is that of Sugar transport protein 4 (STP4) from Arabidopsis thaliana (Mouse-ear cress).